A 1191-amino-acid chain; its full sequence is Phosphatidylinositol 3,4,5-trisphosphate 5-phosphatase 1 (1191 aa).

Residues 8–104 (WNHGNITRSK…GLVTHLQYPV (97 aa)) enclose the SH2 domain. Positions 122 to 148 (SVMSPPELPPRNIPMSAGPSEAKDLPL) are disordered. The SH3-binding 1 signature appears at 127-132 (PELPPR). S246 is modified (phosphoserine). Positions 915–918 (NPNY) match the NPXY motif 1 motif. Y918 is modified (phosphotyrosine). The residue at position 935 (S935) is a Phosphoserine. Y945 carries the phosphotyrosine modification. Disordered regions lie at residues 947-994 (QLPK…EARP) and 1021-1191 (YGSV…TAMQ). Pro residues predominate over residues 962–972 (PPTPPSQPPLS). The residue at position 964 (T964) is a Phosphothreonine. Phosphoserine is present on residues S967 and S972. The short motif at 970-975 (PLSPKK) is the SH3-binding 2 element. Residues 1015-1029 (MFENPLYGSVSSFPK) are interaction with DAB2. Positions 1018-1021 (NPLY) match the NPXY motif 2 motif. Phosphotyrosine is present on Y1021. The span at 1032–1046 (PRKEQESPKMLRKEP) shows a compositional bias: basic and acidic residues. An SH3-binding 3 motif is present at residues 1039–1050 (PKMLRKEPPPCP). Positions 1141 to 1150 (IPAPRPPLPV) are enriched in pro residues. The span at 1162-1184 (KGRDYRDNTELPHHGKHRQEEGL) shows a compositional bias: basic and acidic residues.

The protein belongs to the inositol 1,4,5-trisphosphate 5-phosphatase family. Interacts with tyrosine phosphorylated form of SHC1. Interacts with tyrosine phosphorylated form of DOK1. Interacts with tyrosine phosphorylated form of DOK3. Interacts with tyrosine phosphorylated form of SLAMF1/CD150. Interacts with PTPN11/SHP-2 in response to IL-3. Interacts with receptor EPOR. Interacts with receptors MS4A2/FCER1B and FCER1G. Interacts with receptors FCGR2B and FCGR3. Interacts with receptor FCGR2A, leading to regulate gene expression during the phagocytic process. Interacts with GRB2. Interacts with PLCG1. Interacts with tyrosine kinases SRC and TEC. Interacts with CRKL. Interacts with c-Met/MET. Interacts with MILR1 (tyrosine-phosphorylated). Isoform 5 interacts with IL6ST/gp130. Can weakly interact (via NPXY motif 2) with DAB2 (via PID domain); the interaction is impaired by tyrosine phosphorylation of the NPXY motif. Interacts (via SH2 domain) with tyrosine phosphorylated KLRC1 (via ITIM). Interacts with MPL/TPOR. Tyrosine phosphorylated by the members of the SRC family after exposure to a diverse array of extracellular stimuli such as cytokines, growth factors, antibodies, chemokines, integrin ligands and hypertonic and oxidative stress. Phosphorylated upon IgG receptor FCGR2B-binding. Specifically expressed in immune and hematopoietic cells. Levels vary considerably within this compartment. Lost during erythropoiesis when erythroid cells become Ter119+. Increases substantially with T-cell maturation and when resting B-cells are activated. Also present in mature granulocytes, monocyte/macrophages, mast cells and platelets. Isoform 5 is the only form expressed in embryonic stem (ES) cells and is coexpressed with other isoforms in hematopoietic stem cells, and disappears with differentiation.

The protein localises to the cytoplasm. The protein resides in the cell membrane. It localises to the membrane raft. Its subcellular location is the cytoskeleton. It carries out the reaction a 1,2-diacyl-sn-glycero-3-phospho-(1D-myo-inositol-3,4,5-trisphosphate) + H2O = a 1,2-diacyl-sn-glycero-3-phospho-(1D-myo-inositol-3,4-bisphosphate) + phosphate. The enzyme catalyses a 1,2-diacyl-sn-glycero-3-phospho-(1D-myo-inositol-4,5-bisphosphate) + H2O = a 1,2-diacyl-sn-glycero-3-phospho-(1D-myo-inositol 4-phosphate) + phosphate. It catalyses the reaction 1D-myo-inositol 1,3,4,5-tetrakisphosphate + H2O = 1D-myo-inositol 1,3,4-trisphosphate + phosphate. With respect to regulation, activated upon translocation to the sites of synthesis of PtdIns(3,4,5)P3 in the membrane. Functionally, phosphatidylinositol (PtdIns) phosphatase that specifically hydrolyzes the 5-phosphate of phosphatidylinositol-3,4,5-trisphosphate (PtdIns(3,4,5)P3) to produce PtdIns(3,4)P2, thereby negatively regulating the PI3K (phosphoinositide 3-kinase) pathways. Also able to hydrolyze the 5-phosphate of phosphatidylinositol-4,5-bisphosphate (PtdIns(4,5)P3) and inositol 1,3,4,5-tetrakisphosphate. Acts as a negative regulator of B-cell antigen receptor signaling. Mediates signaling from the FC-gamma-RIIB receptor (FCGR2B), playing a central role in terminating signal transduction from activating immune/hematopoietic cell receptor systems. Acts as a negative regulator of myeloid cell proliferation/survival and chemotaxis, mast cell degranulation, immune cells homeostasis, integrin alpha-IIb/beta-3 signaling in platelets and JNK signaling in B-cells. Regulates proliferation of osteoclast precursors, macrophage programming, phagocytosis and activation and is required for endotoxin tolerance. Involved in the control of cell-cell junctions, CD32a signaling in neutrophils and modulation of EGF-induced phospholipase C activity. Key regulator of neutrophil migration, by governing the formation of the leading edge and polarization required for chemotaxis. Modulates FCGR3/CD16-mediated cytotoxicity in NK cells. Mediates the activin/TGF-beta-induced apoptosis through its Smad-dependent expression. The polypeptide is Phosphatidylinositol 3,4,5-trisphosphate 5-phosphatase 1 (Inpp5d) (Mus musculus (Mouse)).